The primary structure comprises 499 residues: Lanosterol 14-alpha demethylase (499 aa).

Residues 13 to 35 (SAVLQMSLTSVLLTASVFTLTLG) form a helical membrane-spanning segment. Cys441 is a heme binding site.

It belongs to the cytochrome P450 family. Heme is required as a cofactor. In terms of tissue distribution, strongly expressed in intestine. Moderately expressed in liver, with higher levels in females compared to males. Also detected at low levels in brain, eye, kidney and testis.

It is found in the endoplasmic reticulum membrane. The protein localises to the membrane. The catalysed reaction is a 14alpha-methyl steroid + 3 reduced [NADPH--hemoprotein reductase] + 3 O2 = a Delta(14) steroid + formate + 3 oxidized [NADPH--hemoprotein reductase] + 4 H2O + 4 H(+). It carries out the reaction lanosterol + 3 reduced [NADPH--hemoprotein reductase] + 3 O2 = 4,4-dimethyl-5alpha-cholesta-8,14,24-trien-3beta-ol + formate + 3 oxidized [NADPH--hemoprotein reductase] + 4 H2O + 4 H(+). The enzyme catalyses 24,25-dihydrolanosterol + 3 reduced [NADPH--hemoprotein reductase] + 3 O2 = 4,4-dimethyl-8,14-cholestadien-3beta-ol + formate + 3 oxidized [NADPH--hemoprotein reductase] + 4 H2O + 4 H(+). It catalyses the reaction a 14alpha-methyl steroid + reduced [NADPH--hemoprotein reductase] + O2 = a 14alpha-hydroxymethyl steroid + oxidized [NADPH--hemoprotein reductase] + H2O + H(+). The catalysed reaction is a 14alpha-hydroxymethyl steroid + reduced [NADPH--hemoprotein reductase] + O2 = a 14alpha-formyl steroid + oxidized [NADPH--hemoprotein reductase] + 2 H2O + H(+). It carries out the reaction a 14alpha-formyl steroid + reduced [NADPH--hemoprotein reductase] + O2 = a Delta(14) steroid + formate + oxidized [NADPH--hemoprotein reductase] + H2O + 2 H(+). The enzyme catalyses lanosterol + reduced [NADPH--hemoprotein reductase] + O2 = 32-hydroxylanosterol + oxidized [NADPH--hemoprotein reductase] + H2O + H(+). It catalyses the reaction 32-hydroxylanosterol + reduced [NADPH--hemoprotein reductase] + O2 = 32-oxolanosterol + oxidized [NADPH--hemoprotein reductase] + 2 H2O + H(+). The catalysed reaction is 32-oxolanosterol + reduced [NADPH--hemoprotein reductase] + O2 = 4,4-dimethyl-5alpha-cholesta-8,14,24-trien-3beta-ol + formate + oxidized [NADPH--hemoprotein reductase] + H2O + 2 H(+). It carries out the reaction 24,25-dihydrolanosterol + reduced [NADPH--hemoprotein reductase] + O2 = 32-hydroxy-24,25-dihydrolanosterol + oxidized [NADPH--hemoprotein reductase] + H2O + H(+). The enzyme catalyses 32-hydroxy-24,25-dihydrolanosterol + reduced [NADPH--hemoprotein reductase] + O2 = 32-oxo-24,25-dihydrolanosterol + oxidized [NADPH--hemoprotein reductase] + 2 H2O + H(+). It catalyses the reaction 32-oxo-24,25-dihydrolanosterol + reduced [NADPH--hemoprotein reductase] + O2 = 4,4-dimethyl-8,14-cholestadien-3beta-ol + formate + oxidized [NADPH--hemoprotein reductase] + H2O + 2 H(+). The protein operates within steroid biosynthesis; zymosterol biosynthesis; zymosterol from lanosterol: step 1/6. Its activity is regulated as follows. Inhibited by ketoconazole. May also be inhibited to a lesser extent by propiconazole. Its function is as follows. Sterol 14alpha-demethylase that plays a critical role in the cholesterol biosynthesis pathway, being cholesterol the major sterol component in deuterostome membranes as well as a precursor for steroid hormone synthesis. Cytochrome P450 monooxygenase that catalyzes the three-step oxidative removal of the 14alpha-methyl group (C-32) of sterols such as lanosterol (lanosta-8,24-dien-3beta-ol) and 24,25-dihydrolanosterol (DHL) in the form of formate, and converts the sterols to 4,4-dimethyl-5alpha-cholesta-8,14,24-trien-3beta-ol and 4,4-dimethyl-8,14-cholestadien-3beta-ol, respectively, which are intermediates of cholesterol biosynthesis. Can also demethylate substrates not intrinsic to deuterostomes, such as eburicol (24-methylene-24,25-dihydrolanosterol), but at a lower rate than DHL. The sequence is that of Lanosterol 14-alpha demethylase from Danio rerio (Zebrafish).